A 57-amino-acid chain; its full sequence is Large ribosomal subunit protein bL32 (57 aa).

The interval 1–25 (MATPSNKNSKSHKRNRRGHIGLNVP) is disordered. Residues 9 to 19 (SKSHKRNRRGH) are compositionally biased toward basic residues.

Belongs to the bacterial ribosomal protein bL32 family.

In Leuconostoc mesenteroides subsp. mesenteroides (strain ATCC 8293 / DSM 20343 / BCRC 11652 / CCM 1803 / JCM 6124 / NCDO 523 / NBRC 100496 / NCIMB 8023 / NCTC 12954 / NRRL B-1118 / 37Y), this protein is Large ribosomal subunit protein bL32.